A 113-amino-acid polypeptide reads, in one-letter code: Large ribosomal subunit protein eL31B (113 aa).

It belongs to the eukaryotic ribosomal protein eL31 family. Component of the large ribosomal subunit (LSU). Mature yeast ribosomes consist of a small (40S) and a large (60S) subunit. The 40S small subunit contains 1 molecule of ribosomal RNA (18S rRNA) and 33 different proteins (encoded by 57 genes). The large 60S subunit contains 3 rRNA molecules (25S, 5.8S and 5S rRNA) and 46 different proteins (encoded by 81 genes).

The protein localises to the cytoplasm. Component of the ribosome, a large ribonucleoprotein complex responsible for the synthesis of proteins in the cell. The small ribosomal subunit (SSU) binds messenger RNAs (mRNAs) and translates the encoded message by selecting cognate aminoacyl-transfer RNA (tRNA) molecules. The large subunit (LSU) contains the ribosomal catalytic site termed the peptidyl transferase center (PTC), which catalyzes the formation of peptide bonds, thereby polymerizing the amino acids delivered by tRNAs into a polypeptide chain. The nascent polypeptides leave the ribosome through a tunnel in the LSU and interact with protein factors that function in enzymatic processing, targeting, and the membrane insertion of nascent chains at the exit of the ribosomal tunnel. This Saccharomyces cerevisiae (strain ATCC 204508 / S288c) (Baker's yeast) protein is Large ribosomal subunit protein eL31B.